The chain runs to 148 residues: Cytochrome c-type biogenesis protein CcmE (148 aa).

At 1–7 the chain is on the cytoplasmic side; the sequence is MKARNKR. The chain crosses the membrane as a helical; Signal-anchor for type II membrane protein span at residues 8-28; it reads LMLVGGGIALLVAAAALVLSA. The Periplasmic segment spans residues 29-148; the sequence is FQQNLVFFHT…AHKTATTVQQ (120 aa). 2 residues coordinate heme: H123 and Y127.

This sequence belongs to the CcmE/CycJ family.

Its subcellular location is the cell inner membrane. Its function is as follows. Heme chaperone required for the biogenesis of c-type cytochromes. Transiently binds heme delivered by CcmC and transfers the heme to apo-cytochromes in a process facilitated by CcmF and CcmH. The protein is Cytochrome c-type biogenesis protein CcmE of Azoarcus sp. (strain BH72).